The sequence spans 92 residues: Small ribosomal subunit protein uS19c (92 aa).

It belongs to the universal ribosomal protein uS19 family.

It localises to the plastid. The protein localises to the chloroplast. Protein S19 forms a complex with S13 that binds strongly to the 16S ribosomal RNA. The polypeptide is Small ribosomal subunit protein uS19c (Phaeodactylum tricornutum (strain CCAP 1055/1)).